Reading from the N-terminus, the 360-residue chain is Nucleoporin SEH1-B (360 aa).

WD repeat units follow at residues 10–49, 55–96, 111–152, 160–210, 217–258, and 276–315; these read DHKD…NWHC, THSG…SNDK, DSRT…NLSQ, SCKL…RKYA, SVSD…KELS, and NHNS…NWKC.

This sequence belongs to the WD repeat SEC13 family. Component of the Nup107-160 subcomplex of the nuclear pore complex (NPC). The Nup107-160 subcomplex includes NUP160, NUP133, NUP107, NUP98, NUP85, NUP43, NUP37, SEH1 and SEC13. Component of the GATOR2 subcomplex, composed of MIOS, SEC13, SEH1L, WDR24 and WDR59. The GATOR2 complex interacts with CASTOR1 and CASTOR2; the interaction is negatively regulated by arginine. The GATOR2 complex interacts with SESN1, SESN2 and SESN3; the interaction is negatively regulated by amino acids.

The protein localises to the chromosome. It localises to the centromere. The protein resides in the kinetochore. It is found in the nucleus. Its subcellular location is the nuclear pore complex. The protein localises to the lysosome membrane. Its activity is regulated as follows. The GATOR2 complex is negatively regulated by the upstream amino acid sensors CASTOR1 and SESN2, which sequester the GATOR2 complex in absence of amino acids. In the presence of abundant amino acids, GATOR2 is released from CASTOR1 and SESN2 and activated. Functionally, component of the Nup107-160 subcomplex of the nuclear pore complex (NPC). The Nup107-160 subcomplex is required for the assembly of a functional NPC. The Nup107-160 subcomplex is also required for normal kinetochore microtubule attachment, mitotic progression and chromosome segregation. This subunit plays a role in recruitment of the Nup107-160 subcomplex to the kinetochore. As a component of the GATOR2 complex, functions as an activator of the amino acid-sensing branch of the mTORC1 signaling pathway. The GATOR2 complex indirectly activates mTORC1 through the inhibition of the GATOR1 subcomplex. GATOR2 probably acts as an E3 ubiquitin-protein ligase toward GATOR1. In the presence of abundant amino acids, the GATOR2 complex mediates ubiquitination of the NPRL2 core component of the GATOR1 complex, leading to GATOR1 inactivation. In the absence of amino acids, GATOR2 is inhibited, activating the GATOR1 complex. This Xenopus laevis (African clawed frog) protein is Nucleoporin SEH1-B (seh1l-b).